The sequence spans 1095 residues: DNA polymerase delta catalytic subunit (1095 aa).

Positions 1–11 (MNRSGISKKRP) are enriched in basic residues. The disordered stretch occupies residues 1–37 (MNRSGISKKRPPPSNTPPPAGKHRATGDSTPSPAIGT). Zn(2+)-binding residues include C1007, C1010, C1020, and C1023. A CysA-type zinc finger spans residues 1007–1023 (CVGCKVPISNGTLCASC). C1052, C1055, C1065, and C1070 together coordinate [4Fe-4S] cluster. The CysB motif motif lies at 1052–1070 (CQECQGSLHQDVLCTSRDC).

The protein belongs to the DNA polymerase type-B family. In terms of assembly, heterodimer with subunits of 125 kDa and 50 kDa. The 125 kDa subunit contains the polymerase active site and most likely the active site for the 3'-5' exonuclease activity. Requires [4Fe-4S] cluster as cofactor.

The protein resides in the nucleus. The enzyme catalyses DNA(n) + a 2'-deoxyribonucleoside 5'-triphosphate = DNA(n+1) + diphosphate. Functionally, this polymerase possesses two enzymatic activities: DNA synthesis (polymerase) and an exonucleolytic activity that degrades single-stranded DNA in the 3'- to 5'-direction. The sequence is that of DNA polymerase delta catalytic subunit (POLD1) from Arabidopsis thaliana (Mouse-ear cress).